The following is a 345-amino-acid chain: Phosphoribosylformylglycinamidine cyclo-ligase (345 aa).

It belongs to the AIR synthase family.

Its subcellular location is the cytoplasm. It catalyses the reaction 2-formamido-N(1)-(5-O-phospho-beta-D-ribosyl)acetamidine + ATP = 5-amino-1-(5-phospho-beta-D-ribosyl)imidazole + ADP + phosphate + H(+). The protein operates within purine metabolism; IMP biosynthesis via de novo pathway; 5-amino-1-(5-phospho-D-ribosyl)imidazole from N(2)-formyl-N(1)-(5-phospho-D-ribosyl)glycinamide: step 2/2. The polypeptide is Phosphoribosylformylglycinamidine cyclo-ligase (Histophilus somni (strain 2336) (Haemophilus somnus)).